Reading from the N-terminus, the 411-residue chain is AT-hook motif nuclear-localized protein 14 (411 aa).

Disordered regions lie at residues 1–32 (MDPN…QRLT), 54–164 (ASTG…LGSV), 289–348 (KDAA…HQAG), and 366–411 (THSR…QIPD). Basic residues predominate over residues 7 to 19 (HHHHQQQQLHHLH). The span at 20-29 (QQQQQQQQQQ) shows a compositional bias: low complexity. A compositionally biased stretch (polar residues) spans 54–66 (ASTGNAVPSSNNG). Positions 105–113 (KRKRGRPRK) match the Bipartite nuclear localization signal motif. Positions 105 to 117 (KRKRGRPRKYVTP) form a DNA-binding region, a.T hook. 2 stretches are compositionally biased toward low complexity: residues 120 to 135 (ALAA…SSSA) and 144 to 159 (VTGG…SKKS). Residues 165–305 (GKTGQCFTPH…GKGDASNSGS (141 aa)) enclose the PPC domain. Polar residues predominate over residues 306–315 (RLTSPVSSGQ). Over residues 374 to 390 (RGGGNSGHDGRGGGGYD) the composition is skewed to gly residues.

It is found in the nucleus. Transcription factor that specifically binds AT-rich DNA sequences related to the nuclear matrix attachment regions (MARs). This is AT-hook motif nuclear-localized protein 14 from Arabidopsis thaliana (Mouse-ear cress).